Here is a 724-residue protein sequence, read N- to C-terminus: 1,4-alpha-glucan branching enzyme GlgB 1 (724 aa).

D403 (nucleophile) is an active-site residue. Catalysis depends on E456, which acts as the Proton donor.

It belongs to the glycosyl hydrolase 13 family. GlgB subfamily. As to quaternary structure, monomer.

The catalysed reaction is Transfers a segment of a (1-&gt;4)-alpha-D-glucan chain to a primary hydroxy group in a similar glucan chain.. It functions in the pathway glycan biosynthesis; glycogen biosynthesis. Functionally, catalyzes the formation of the alpha-1,6-glucosidic linkages in glycogen by scission of a 1,4-alpha-linked oligosaccharide from growing alpha-1,4-glucan chains and the subsequent attachment of the oligosaccharide to the alpha-1,6 position. The chain is 1,4-alpha-glucan branching enzyme GlgB 1 from Xanthomonas campestris pv. campestris (strain 8004).